The sequence spans 95 residues: Co-chaperonin GroES (95 aa).

The protein belongs to the GroES chaperonin family. In terms of assembly, heptamer of 7 subunits arranged in a ring. Interacts with the chaperonin GroEL.

The protein localises to the cytoplasm. Functionally, together with the chaperonin GroEL, plays an essential role in assisting protein folding. The GroEL-GroES system forms a nano-cage that allows encapsulation of the non-native substrate proteins and provides a physical environment optimized to promote and accelerate protein folding. GroES binds to the apical surface of the GroEL ring, thereby capping the opening of the GroEL channel. In Xanthomonas axonopodis pv. citri (strain 306), this protein is Co-chaperonin GroES.